The following is a 324-amino-acid chain: Glyoxylate/hydroxypyruvate reductase B (324 aa).

Residues R237 and E266 contribute to the active site. The active-site Proton donor is H285.

Belongs to the D-isomer specific 2-hydroxyacid dehydrogenase family. GhrB subfamily. As to quaternary structure, homodimer.

It is found in the cytoplasm. The catalysed reaction is glycolate + NADP(+) = glyoxylate + NADPH + H(+). It carries out the reaction (R)-glycerate + NAD(+) = 3-hydroxypyruvate + NADH + H(+). It catalyses the reaction (R)-glycerate + NADP(+) = 3-hydroxypyruvate + NADPH + H(+). Its function is as follows. Catalyzes the NADPH-dependent reduction of glyoxylate and hydroxypyruvate into glycolate and glycerate, respectively. The chain is Glyoxylate/hydroxypyruvate reductase B from Salmonella choleraesuis (strain SC-B67).